Consider the following 213-residue polypeptide: Large ribosomal subunit protein uL3 (213 aa).

Positions 131-168 (GPMSHGSKNHRLPGSTGAGTTPGRVYPGKRMAGRSGND) are disordered.

This sequence belongs to the universal ribosomal protein uL3 family. As to quaternary structure, part of the 50S ribosomal subunit. Forms a cluster with proteins L14 and L19.

Its function is as follows. One of the primary rRNA binding proteins, it binds directly near the 3'-end of the 23S rRNA, where it nucleates assembly of the 50S subunit. This Synechococcus elongatus (strain ATCC 33912 / PCC 7942 / FACHB-805) (Anacystis nidulans R2) protein is Large ribosomal subunit protein uL3.